Consider the following 549-residue polypeptide: MKNINPTQTQAWQALEAHFAANKETRLKDLFAQDPKRFDKFSLTFGGDILVDYSKNLITEETLKLLVDLAKETDLRSAIDAMFNGEKINMTEGRSVLHVALRNRSDRPIECDGKDVMPEVNAVLAKMKGFCEKIISGEWKGYTGKAIQHVVNIGIGGSDLGPVMITEALRPYKNHLQMHFVSNVDGTHIAETLKEIDAETTLFLVASKTFTTQETMTNALTARDWFIKIAGDKAHVAKHFAALSTNGKAVAEFGIDTDNMFEFWDWVGGRYSSWSAIGMPIALSVGFDNFEALLQGAFEMDMHFATASYEQNVPVLLALIGLWYNNFHGAESEAILPYDQYMHRFPAYFQQGNMESNGKYVDRNGNPVDHQTGPIIWGEPGTNGQHAFYQLIHQGTKLIPCDFLAPAISHNPIGDHHPKLLANFFAQTEALAFGKSKEQVEAEFLAAGKTLEQVEDLVPFKVFEGNRPTNSILFKSLTPKTLGALIAMYEHKIFVQGAIWNIFSFDQWGVELGKQLANKILPELNTAEAVTSHDCSTNGLINTWKAWKA.

The active-site Proton donor is the E355. Residues H386 and K514 contribute to the active site.

This sequence belongs to the GPI family.

Its subcellular location is the cytoplasm. It catalyses the reaction alpha-D-glucose 6-phosphate = beta-D-fructose 6-phosphate. Its pathway is carbohydrate biosynthesis; gluconeogenesis. It participates in carbohydrate degradation; glycolysis; D-glyceraldehyde 3-phosphate and glycerone phosphate from D-glucose: step 2/4. In terms of biological role, catalyzes the reversible isomerization of glucose-6-phosphate to fructose-6-phosphate. The chain is Glucose-6-phosphate isomerase from Aeromonas salmonicida (strain A449).